The primary structure comprises 214 residues: Large ribosomal subunit protein uL3 (214 aa).

The tract at residues 129–155 is disordered; sequence FGRGPMSHGSKNHRRPGSVGAGTTPGR.

This sequence belongs to the universal ribosomal protein uL3 family. Part of the 50S ribosomal subunit. Forms a cluster with proteins L14 and L19.

Functionally, one of the primary rRNA binding proteins, it binds directly near the 3'-end of the 23S rRNA, where it nucleates assembly of the 50S subunit. The protein is Large ribosomal subunit protein uL3 of Synechococcus sp. (strain JA-3-3Ab) (Cyanobacteria bacterium Yellowstone A-Prime).